The chain runs to 307 residues: Probable deoxyhypusine synthase (307 aa).

The active-site Nucleophile is the Lys-278.

The protein belongs to the deoxyhypusine synthase family. Requires NAD(+) as cofactor.

It catalyses the reaction [eIF5A protein]-L-lysine + spermidine = [eIF5A protein]-deoxyhypusine + propane-1,3-diamine. The protein operates within protein modification; eIF5A hypusination. Catalyzes the NAD-dependent oxidative cleavage of spermidine and the subsequent transfer of the butylamine moiety of spermidine to the epsilon-amino group of a specific lysine residue of the eIF-5A precursor protein to form the intermediate deoxyhypusine residue. This is Probable deoxyhypusine synthase (dys) from Methanothermobacter thermautotrophicus (strain ATCC 29096 / DSM 1053 / JCM 10044 / NBRC 100330 / Delta H) (Methanobacterium thermoautotrophicum).